The chain runs to 513 residues: ATP synthase subunit alpha (513 aa).

169 to 176 (GDRQTGKT) provides a ligand contact to ATP.

Belongs to the ATPase alpha/beta chains family. As to quaternary structure, F-type ATPases have 2 components, CF(1) - the catalytic core - and CF(0) - the membrane proton channel. CF(1) has five subunits: alpha(3), beta(3), gamma(1), delta(1), epsilon(1). CF(0) has three main subunits: a(1), b(2) and c(9-12). The alpha and beta chains form an alternating ring which encloses part of the gamma chain. CF(1) is attached to CF(0) by a central stalk formed by the gamma and epsilon chains, while a peripheral stalk is formed by the delta and b chains.

It localises to the cell inner membrane. The enzyme catalyses ATP + H2O + 4 H(+)(in) = ADP + phosphate + 5 H(+)(out). Functionally, produces ATP from ADP in the presence of a proton gradient across the membrane. The alpha chain is a regulatory subunit. The sequence is that of ATP synthase subunit alpha from Vibrio vulnificus (strain CMCP6).